The sequence spans 92 residues: Small integral membrane protein 12 (92 aa).

The chain crosses the membrane as a helical span at residues Tyr-15–Phe-34.

The protein belongs to the SMIM12 family.

The protein resides in the membrane. The chain is Small integral membrane protein 12 (Smim12) from Mus musculus (Mouse).